Consider the following 411-residue polypeptide: MALIVQKFGGTSVGSIERIEQVAEKVKKHREAGDDLVVVLSAMSGETNRLIDLAKQITDQPVPRELDVIVSTGEQVTIALLTMALIKRGVPAVSYTGNQVRILTDSSHNKARILQIDDQKIRADLKEGRVVVVAGFQGVDEHGSITTLGRGGSDTTGVALAAALKADECQIYTDVDGVYTTDPRVVPQARRLEKITFEEMLEMASLGSKVLQIRSVEFAGKYNVPLRVLHSFKEGPGTLITIDEEESMEQPIISGIAFNRDEAKLTIRGVPDTPGVAFKILGPISASNIEVDMIVQNVAHDNTTDFTFTVHRNEYEKAQSVLENTAREIGAREVIGDTKIAKVSIVGVGMRSHAGVASCMFEALAKESINIQMISTSEIKVSVVLEEKYLELAVRALHTAFDLDAPARQGE.

One can recognise an ACT domain in the interval 265-348; the sequence is LTIRGVPDTP…KIAKVSIVGV (84 aa).

Belongs to the aspartokinase family.

It is found in the cytoplasm. The enzyme catalyses L-aspartate + ATP = 4-phospho-L-aspartate + ADP. It participates in amino-acid biosynthesis; L-lysine biosynthesis via DAP pathway; (S)-tetrahydrodipicolinate from L-aspartate: step 1/4. It functions in the pathway amino-acid biosynthesis; L-methionine biosynthesis via de novo pathway; L-homoserine from L-aspartate: step 1/3. The protein operates within amino-acid biosynthesis; L-threonine biosynthesis; L-threonine from L-aspartate: step 1/5. With respect to regulation, allosterically feedback inhibited by L-lysine and L-threonine individually and also subject to a concerted feedback inhibition by these amino acids. In terms of biological role, involved in the biosynthesis of L-aspartate-beta-semialdehyde which is a central intermediate in the biosynthesis of different amino acids (L-lysine, L-methionine, L-threonine). Catalyzes the phosphorylation of the beta-carboxyl group of L-aspartate to yield 4-phospho-L-aspartate. This chain is Aspartate kinase, found in Pseudomonas putida (strain ATCC 47054 / DSM 6125 / CFBP 8728 / NCIMB 11950 / KT2440).